The chain runs to 320 residues: MSFAATTKKELTQLETDLCCSKAELAALIRMNGSLSFVNKQLGLDVTTENAAIARRIYTLIKKVFPMMFVELLVRKKMRLKKNNVYLVRLKQEAETLLKELKIIGEGFQIHRTISTDIVSATCCRRAYLRGAFLAGGSINHPETSSYHLEIFSLYEEHNESLCELMNSFQLNAKKLERKKGFITYIKESEKITEFLNIIGAHQALLYFEDVRIMKDMRNSVNRLVNCETANLNKTVGAALRQVENIKFLDQEIGLDALPTKLREIAELRLKHQDVTLKELGEMVESGKVSKSGVNHRLRKIDELAEKLRAGVPAESSSPR.

The segment at residues Thr-276–Ala-310 is a DNA-binding region (H-T-H motif).

It belongs to the WhiA family.

In terms of biological role, involved in cell division and chromosome segregation. This chain is Probable cell division protein WhiA, found in Halalkalibacterium halodurans (strain ATCC BAA-125 / DSM 18197 / FERM 7344 / JCM 9153 / C-125) (Bacillus halodurans).